Consider the following 757-residue polypeptide: Probable serine/threonine-protein kinase pknA2 (757 aa).

The region spanning 14-274 (YRIVRNIAEG…DGAAAAEELS (261 aa)) is the Protein kinase domain. Residues 20–28 (IAEGGMATV) and Lys43 contribute to the ATP site. Residue Asp140 is the Proton acceptor of the active site. Residues 344–387 (DTGGAADVNPPAPPVAPTTALDSSTPADASAPHKTQIMAQSGSE) form a disordered region. PASTA domains lie at 466 to 539 (DANA…VVSK), 545 to 614 (TIPK…TLSK), and 615 to 681 (GPMP…VISK).

Belongs to the protein kinase superfamily. Ser/Thr protein kinase family.

It catalyses the reaction L-seryl-[protein] + ATP = O-phospho-L-seryl-[protein] + ADP + H(+). It carries out the reaction L-threonyl-[protein] + ATP = O-phospho-L-threonyl-[protein] + ADP + H(+). In Bifidobacterium longum (strain NCC 2705), this protein is Probable serine/threonine-protein kinase pknA2 (pknA2).